A 264-amino-acid chain; its full sequence is Catenin delta-2 (264 aa).

ARM repeat units follow at residues 20–59 (NKIK…NLVY), 64–104 (DDNK…NLSS), 120–162 (LTNA…NVSS), and 166–211 (EARR…NLSY). Positions 238 to 264 (GKDAESSGCWGKKKKKKKSQDQWDGVG) are disordered.

Belongs to the beta-catenin family. As to quaternary structure, binds to E-cadherin at a juxtamembrane site within the cytoplasmic domain. Binds to PSEN1. Interacts with ZBTB33. Interacts with ARHGEF28. Interacts (via the extreme C-terminus) with FRMPD2 (via the PDZ 2 domain). Interacts with PDZD2. Interacts with CDK5. Interacts with CTNBB1. Interacts with GSK3A and GSK3B. Interacts with DNM2. Interacts with CCDC85B. O-glycosylated. Post-translationally, phosphorylated by CDK5. Phosphorylated by GSK3B. As to expression, predominantly expressed in brain; accumulates in cortical neurons (at protein level).

The protein resides in the nucleus. It is found in the cell junction. The protein localises to the adherens junction. Its subcellular location is the cell projection. It localises to the dendrite. The protein resides in the perikaryon. Has a critical role in neuronal development, particularly in the formation and/or maintenance of dendritic spines and synapses. Involved in the regulation of canonical Wnt signaling. It probably acts on beta-catenin turnover, facilitating beta-catenin interaction with GSK3B, phosphorylation, ubiquitination and degradation. May be involved in neuronal cell adhesion and tissue morphogenesis and integrity by regulating adhesion molecules. Functions as a transcriptional activator when bound to ZBTB33. This chain is Catenin delta-2 (Ctnnd2), found in Rattus norvegicus (Rat).